Here is a 151-residue protein sequence, read N- to C-terminus: uncharacterized protein (151 aa).

This is an uncharacterized protein from Rhizobium meliloti (strain 1021) (Ensifer meliloti).